Here is a 188-residue protein sequence, read N- to C-terminus: Adenine phosphoribosyltransferase (188 aa).

The protein belongs to the purine/pyrimidine phosphoribosyltransferase family. Homodimer.

The protein localises to the cytoplasm. The enzyme catalyses AMP + diphosphate = 5-phospho-alpha-D-ribose 1-diphosphate + adenine. It participates in purine metabolism; AMP biosynthesis via salvage pathway; AMP from adenine: step 1/1. Catalyzes a salvage reaction resulting in the formation of AMP, that is energically less costly than de novo synthesis. This is Adenine phosphoribosyltransferase from Burkholderia orbicola (strain MC0-3).